Reading from the N-terminus, the 162-residue chain is Cyclic pyranopterin monophosphate synthase (162 aa).

Substrate-binding positions include 75–77 (LCH) and 113–114 (ME). Asp128 is an active-site residue.

The protein belongs to the MoaC family. Homohexamer; trimer of dimers.

It carries out the reaction (8S)-3',8-cyclo-7,8-dihydroguanosine 5'-triphosphate = cyclic pyranopterin phosphate + diphosphate. The protein operates within cofactor biosynthesis; molybdopterin biosynthesis. Functionally, catalyzes the conversion of (8S)-3',8-cyclo-7,8-dihydroguanosine 5'-triphosphate to cyclic pyranopterin monophosphate (cPMP). The polypeptide is Cyclic pyranopterin monophosphate synthase (Burkholderia cenocepacia (strain ATCC BAA-245 / DSM 16553 / LMG 16656 / NCTC 13227 / J2315 / CF5610) (Burkholderia cepacia (strain J2315))).